Consider the following 271-residue polypeptide: Orotidine 5'-phosphate decarboxylase (271 aa).

Lys95 functions as the Proton donor in the catalytic mechanism.

Belongs to the OMP decarboxylase family. Type 2 subfamily.

The enzyme catalyses orotidine 5'-phosphate + H(+) = UMP + CO2. Its pathway is pyrimidine metabolism; UMP biosynthesis via de novo pathway; UMP from orotate: step 2/2. This chain is Orotidine 5'-phosphate decarboxylase, found in Aromatoleum aromaticum (strain DSM 19018 / LMG 30748 / EbN1) (Azoarcus sp. (strain EbN1)).